The primary structure comprises 237 residues: Transcriptional regulatory protein YvrH (237 aa).

Positions 5 to 119 (SILIVDDEKA…ELAARIRAHL (115 aa)) constitute a Response regulatory domain. Asp55 is modified (4-aspartylphosphate). The ompR/PhoB-type DNA-binding region spans 131–230 (NQTYTYDYFT…VRGLGYRFIP (100 aa)).

Post-translationally, phosphorylated by YvrG.

The protein resides in the cytoplasm. In terms of biological role, member of the two-component regulatory system YvrG/YvrH that positively regulates 7 transcriptional units (wprA, wapA-yxxG, dltABCDE, sunA, sunT-bdbA-yolJ-bdbB, sigO-rsoA, and sigX-rsiX), and negatively regulates the lytABC operon. This is Transcriptional regulatory protein YvrH (yvrH) from Bacillus subtilis (strain 168).